Reading from the N-terminus, the 361-residue chain is Chorismate synthase (361 aa).

Arg47 contacts NADP(+). FMN is bound by residues 124–126 (RAS), Gly286, 301–305 (KPTAT), and Arg327.

It belongs to the chorismate synthase family. In terms of assembly, homotetramer. FMNH2 is required as a cofactor.

It catalyses the reaction 5-O-(1-carboxyvinyl)-3-phosphoshikimate = chorismate + phosphate. It participates in metabolic intermediate biosynthesis; chorismate biosynthesis; chorismate from D-erythrose 4-phosphate and phosphoenolpyruvate: step 7/7. Functionally, catalyzes the anti-1,4-elimination of the C-3 phosphate and the C-6 proR hydrogen from 5-enolpyruvylshikimate-3-phosphate (EPSP) to yield chorismate, which is the branch point compound that serves as the starting substrate for the three terminal pathways of aromatic amino acid biosynthesis. This reaction introduces a second double bond into the aromatic ring system. The polypeptide is Chorismate synthase (Akkermansia muciniphila (strain ATCC BAA-835 / DSM 22959 / JCM 33894 / BCRC 81048 / CCUG 64013 / CIP 107961 / Muc)).